Reading from the N-terminus, the 294-residue chain is Flagellin B1 (294 aa).

The propeptide occupies 1 to 8 (MKTRTRKG).

It belongs to the archaeal flagellin family.

It is found in the archaeal flagellum. In terms of biological role, flagellin is the subunit protein which polymerizes to form the filaments of archaeal flagella. In Thermococcus kodakarensis (strain ATCC BAA-918 / JCM 12380 / KOD1) (Pyrococcus kodakaraensis (strain KOD1)), this protein is Flagellin B1 (flaB1).